Reading from the N-terminus, the 218-residue chain is Ras-related protein YPT3 (218 aa).

Position 20–27 (20–27) interacts with GTP; the sequence is GDSGVGKS. An Effector region motif is present at residues 42 to 50; the sequence is SKSTIGVEF. Residues 68–72 and 126–129 each bind GTP; these read DTAGQ and NKSD. The disordered stretch occupies residues 186 to 205; sequence GDEGATSSAPPKGETINIKD. Residues C215 and C216 are each lipidated (S-geranylgeranyl cysteine).

This sequence belongs to the small GTPase superfamily. Rab family. In terms of tissue distribution, its expression is weak in leaves, higher in stems and roots, but highest in petals, stigma and stamens.

It localises to the cell membrane. Protein transport. Probably involved in vesicular traffic. The sequence is that of Ras-related protein YPT3 (YPT3) from Nicotiana plumbaginifolia (Leadwort-leaved tobacco).